We begin with the raw amino-acid sequence, 99 residues long: Aspartyl/glutamyl-tRNA(Asn/Gln) amidotransferase subunit C (99 aa).

Belongs to the GatC family. As to quaternary structure, heterotrimer of A, B and C subunits.

The catalysed reaction is L-glutamyl-tRNA(Gln) + L-glutamine + ATP + H2O = L-glutaminyl-tRNA(Gln) + L-glutamate + ADP + phosphate + H(+). The enzyme catalyses L-aspartyl-tRNA(Asn) + L-glutamine + ATP + H2O = L-asparaginyl-tRNA(Asn) + L-glutamate + ADP + phosphate + 2 H(+). Allows the formation of correctly charged Asn-tRNA(Asn) or Gln-tRNA(Gln) through the transamidation of misacylated Asp-tRNA(Asn) or Glu-tRNA(Gln) in organisms which lack either or both of asparaginyl-tRNA or glutaminyl-tRNA synthetases. The reaction takes place in the presence of glutamine and ATP through an activated phospho-Asp-tRNA(Asn) or phospho-Glu-tRNA(Gln). The chain is Aspartyl/glutamyl-tRNA(Asn/Gln) amidotransferase subunit C from Corynebacterium diphtheriae (strain ATCC 700971 / NCTC 13129 / Biotype gravis).